The chain runs to 62 residues: Large ribosomal subunit protein uL15 (62 aa).

It belongs to the universal ribosomal protein uL15 family.

The chain is Large ribosomal subunit protein uL15 (RPL28) from Candida albicans (Yeast).